The primary structure comprises 72 residues: Conotoxin Vc6.16 (72 aa).

Residues Met-1–Ala-19 form the signal peptide. Positions Leu-20–Gln-44 are excised as a propeptide. Cystine bridges form between Cys-48-Cys-62, Cys-55-Cys-66, and Cys-61-Cys-71.

Belongs to the conotoxin O2 superfamily. In terms of tissue distribution, expressed by the venom duct.

It is found in the secreted. In terms of biological role, inhibits voltage-gated ion channels. This chain is Conotoxin Vc6.16, found in Conus victoriae (Queen Victoria cone).